The primary structure comprises 524 residues: Phosphoenolpyruvate carboxykinase (ATP) (524 aa).

Substrate contacts are provided by R52, Y188, and K194. Residues K194, H213, and 229–237 contribute to the ATP site; that span reads GLSGTGKTT. Mn(2+) contacts are provided by K194 and H213. D250 provides a ligand contact to Mn(2+). Residues E278, R314, and T439 each coordinate ATP. R314 contacts substrate.

The protein belongs to the phosphoenolpyruvate carboxykinase (ATP) family. Mn(2+) serves as cofactor.

The protein resides in the cytoplasm. It carries out the reaction oxaloacetate + ATP = phosphoenolpyruvate + ADP + CO2. It functions in the pathway carbohydrate biosynthesis; gluconeogenesis. Involved in the gluconeogenesis. Catalyzes the conversion of oxaloacetate (OAA) to phosphoenolpyruvate (PEP) through direct phosphoryl transfer between the nucleoside triphosphate and OAA. This is Phosphoenolpyruvate carboxykinase (ATP) from Campylobacter jejuni subsp. jejuni serotype O:2 (strain ATCC 700819 / NCTC 11168).